Consider the following 840-residue polypeptide: Mechanosensitive ion channel protein Msy2 (840 aa).

At 1 to 68 (MNEHRREPHR…WFNNLSFITR (68 aa)) the chain is on the cytoplasmic side. A helical membrane pass occupies residues 69 to 89 (WITIWFPLAGALVIPLAVGVS). Residues 90-100 (PYPNAKLGGVR) lie on the Lumenal side of the membrane. Residues 101-121 (IFWIFVWLEVAWGGFWVSRVI) traverse the membrane as a helical segment. The Cytoplasmic segment spans residues 122-126 (ARLLP). Residues 127 to 147 (YILYPLMGILPFTMYKYTVIL) traverse the membrane as a helical segment. Residues 148–151 (TALE) are Lumenal-facing. Residues 152-172 (MPLAIFFCSIVCVCTFSPIMI) form a helical membrane-spanning segment. At 173-225 (GKGNFTSTTVTTTTSATATPTASASSNAVESVFVTKTAASVPSWIKVITKILG) the chain is on the cytoplasmic side. Residues 226–246 (AAVVTSIVLLLEKIFLHFIGF) form a helical membrane-spanning segment. Residues 247–449 (HYHEVQYQYR…LALGKLDRVG (203 aa)) are Lumenal-facing. In terms of domain architecture, EF-hand spans 392 to 427 (IPDDEINDIFHILDNDYSRTVTLDEMEQFTREISIE). The helical transmembrane segment at 450–491 (LGVVGIIAVLTFISFLDTSFATILAAFGTTLLSLSFVFSTSA) threads the bilayer. At 492–840 (QELMSSIIFL…SQNMDGQIQY (349 aa)) the chain is on the cytoplasmic side. 2 disordered regions span residues 677 to 730 (EYSK…KRED) and 775 to 819 (ESNG…NTQA). Positions 688–700 (SDISSTASSNSLS) are enriched in low complexity. A compositionally biased stretch (basic and acidic residues) spans 708–730 (SESRNYHTHDEDNSSDDNHKRED). A compositionally biased stretch (low complexity) spans 776–819 (SNGNANGDNTATNSQGATDNGQTTTNTTQNNVDNTQATTDNTQA).

The protein belongs to the MscS (TC 1.A.23) family.

The protein localises to the endoplasmic reticulum membrane. In terms of biological role, regulates intracellular calcium levels and cell volume for survival in response to hypo-osmotic shock. Involved in maintaining vacuole integrity and protecting the nuclear envelope upon hypo-osmotic shock. The sequence is that of Mechanosensitive ion channel protein Msy2 from Schizosaccharomyces pombe (strain 972 / ATCC 24843) (Fission yeast).